The primary structure comprises 132 residues: Large ribosomal subunit protein uL14 (132 aa).

Belongs to the universal ribosomal protein uL14 family. As to quaternary structure, part of the 50S ribosomal subunit. Forms a cluster with proteins L3 and L24e, part of which may contact the 16S rRNA in 2 intersubunit bridges.

Its function is as follows. Binds to 23S rRNA. Forms part of two intersubunit bridges in the 70S ribosome. The sequence is that of Large ribosomal subunit protein uL14 from Methanosarcina acetivorans (strain ATCC 35395 / DSM 2834 / JCM 12185 / C2A).